The sequence spans 792 residues: Cis-abienol synthase, chloroplastic (792 aa).

The N-terminal 37 residues, 1–37 (MVLGLRSKIIPLPDHKLGNIKLGSVTNAICHRPCRVR), are a transit peptide targeting the chloroplast. Positions 539, 543, 684, and 692 each coordinate Mg(2+). Residues 539-543 (DDFFD) carry the DDXXD motif motif.

It belongs to the terpene synthase family. It depends on Mg(2+) as a cofactor. Expressed specifically in trichomes.

The protein resides in the plastid. The protein localises to the chloroplast. The catalysed reaction is 8-hydroxycopalyl diphosphate = cis-abienol + diphosphate. Its pathway is secondary metabolite biosynthesis; terpenoid biosynthesis. Functionally, involved in the biosynthesis of cis-abienol, a labdane diterpene that can be used as synthesis precursor of ambergris substitution fragance products. The chain is Cis-abienol synthase, chloroplastic from Nicotiana tabacum (Common tobacco).